A 66-amino-acid polypeptide reads, in one-letter code: Beta-toxin Cbo3 (66 aa).

An LCN-type CS-alpha/beta domain is found at 1-66; it reads KEGYIVNYHD…VWPLPKKTCN (66 aa). 4 cysteine pairs are disulfide-bonded: Cys12–Cys65, Cys16–Cys41, Cys25–Cys46, and Cys29–Cys48. Residue Asn66 is modified to Asparagine amide.

Belongs to the long (4 C-C) scorpion toxin superfamily. Sodium channel inhibitor family. Beta subfamily. In terms of tissue distribution, expressed by the venom gland.

It is found in the secreted. Its function is as follows. Beta toxins bind voltage-independently at site-4 of sodium channels and shift the voltage of activation toward more negative potentials thereby affecting sodium channel activation and promoting spontaneous and repetitive firing. A mixture of Cbo2 and Cbo3 is weakly active on the human voltage-gated sodium channels Nav1.4/SCN4A and Nav1.6/SCN8A when tested at 200 nM. In vivo, is toxic to mice when intraperitoneally injected. This is Beta-toxin Cbo3 from Centruroides bonito (Scorpion).